Reading from the N-terminus, the 340-residue chain is Uroporphyrinogen decarboxylase (340 aa).

Residues 21 to 25 (RQAGR), Asp-71, Tyr-148, Ser-203, and His-316 contribute to the substrate site.

This sequence belongs to the uroporphyrinogen decarboxylase family. Homodimer.

The protein localises to the cytoplasm. It carries out the reaction uroporphyrinogen III + 4 H(+) = coproporphyrinogen III + 4 CO2. It functions in the pathway porphyrin-containing compound metabolism; protoporphyrin-IX biosynthesis; coproporphyrinogen-III from 5-aminolevulinate: step 4/4. Catalyzes the decarboxylation of four acetate groups of uroporphyrinogen-III to yield coproporphyrinogen-III. The protein is Uroporphyrinogen decarboxylase of Campylobacter jejuni subsp. jejuni serotype O:6 (strain 81116 / NCTC 11828).